Reading from the N-terminus, the 140-residue chain is Fluoride-specific ion channel FluC 1 (140 aa).

Helical transmembrane passes span 4 to 24 (LYLAVGGFCGAVGRYFLASFI), 32 to 52 (FPLATWIINLGGCLAMGFILT), 70 to 90 (TGMLGAFTTFSTFSVETLHLL), and 99 to 119 (LLYLFASLAGGLICMQTGIFL). Na(+)-binding residues include Gly74 and Thr77.

It belongs to the fluoride channel Fluc/FEX (TC 1.A.43) family.

The protein localises to the cell membrane. It carries out the reaction fluoride(in) = fluoride(out). With respect to regulation, na(+) is not transported, but it plays an essential structural role and its presence is essential for fluoride channel function. Functionally, fluoride-specific ion channel. Important for reducing fluoride concentration in the cell, thus reducing its toxicity. The protein is Fluoride-specific ion channel FluC 1 of Moorella thermoacetica (strain ATCC 39073 / JCM 9320).